Consider the following 98-residue polypeptide: Large ribosomal subunit protein uL23 (98 aa).

Belongs to the universal ribosomal protein uL23 family. Part of the 50S ribosomal subunit. Contacts protein L29, and trigger factor when it is bound to the ribosome.

In terms of biological role, one of the early assembly proteins it binds 23S rRNA. One of the proteins that surrounds the polypeptide exit tunnel on the outside of the ribosome. Forms the main docking site for trigger factor binding to the ribosome. The protein is Large ribosomal subunit protein uL23 of Rickettsia typhi (strain ATCC VR-144 / Wilmington).